Reading from the N-terminus, the 192-residue chain is Interleukin-18 (192 aa).

A propeptide spanning residues 1 to 35 is cleaved from the precursor; that stretch reads MAAEPVEDNCISFVEMKFINNTLYFVAENGDLESD.

It belongs to the IL-1 family. In terms of assembly, forms a ternary complex with ligand-binding receptor subunit IL18R1 and signaling receptor subunit IL18RAP at the plasma membrane. Mature IL18 first binds to IL18R1 forming a low affinity binary complex, which then interacts with IL18RAP to form a high affinity ternary complex that signals inside the cell. Interacts with cargo receptor TMED10; the interaction mediates the translocation from the cytoplasm into the ERGIC (endoplasmic reticulum-Golgi intermediate compartment) and thereby secretion. Post-translationally, the pro-IL-18 precursor is processed by CASP1, CASP4 or CASP5 to yield its mature, active form. The pro-IL-18 precursor features autoinhibitory interactions between the propeptide and the post-cleavage-site region, preventing recognition by the IL18R1 receptor. Processing by CASP1, CASP4 or CASP5 induces conformational changes to generate critical receptor-binding sites. The mature form is then secreted and released in the extracellular milieu by passing through the gasdermin-D (GSDMD) pore. In contrast, cleavage by CASP3 inactivates IL18.

It is found in the cytoplasm. Its subcellular location is the cytosol. The protein localises to the secreted. Functionally, pro-inflammatory cytokine primarily involved in epithelial barrier repair, polarized T-helper 1 (Th1) cell and natural killer (NK) cell immune responses. Upon binding to IL18R1 and IL18RAP, forms a signaling ternary complex which activates NF-kappa-B, triggering synthesis of inflammatory mediators. Synergizes with IL12/interleukin-12 to induce IFNG synthesis from T-helper 1 (Th1) cells and natural killer (NK) cells. Involved in transduction of inflammation downstream of pyroptosis: its mature form is specifically released in the extracellular milieu by passing through the gasdermin-D (GSDMD) pore. This chain is Interleukin-18 (IL18), found in Capra hircus (Goat).